Consider the following 436-residue polypeptide: Adenosylhomocysteinase (436 aa).

Positions 62, 136, and 161 each coordinate substrate. 162-164 (TTT) contacts NAD(+). Residues Lys-191 and Asp-195 each contribute to the substrate site. Residues Asn-196, 225–230 (GFGDVG), Glu-248, Asn-283, 304–306 (IGH), and Asn-352 contribute to the NAD(+) site.

The protein belongs to the adenosylhomocysteinase family. It depends on NAD(+) as a cofactor.

It localises to the cytoplasm. It carries out the reaction S-adenosyl-L-homocysteine + H2O = L-homocysteine + adenosine. Its pathway is amino-acid biosynthesis; L-homocysteine biosynthesis; L-homocysteine from S-adenosyl-L-homocysteine: step 1/1. Its function is as follows. May play a key role in the regulation of the intracellular concentration of adenosylhomocysteine. This Leptospira interrogans serogroup Icterohaemorrhagiae serovar copenhageni (strain Fiocruz L1-130) protein is Adenosylhomocysteinase.